The sequence spans 30 residues: TQACRINSGNVPSELDLRSLRTVTPIRMQG.

This sequence belongs to the peptidase C1 family.

It is found in the secreted. The enzyme catalyses Broad endopeptidase specificity.. Functionally, thiol protease that hydrolyzes proteins, with a preference for Phe or basic residues. The protein is Peptidase 1 (DERM1) of Dermatophagoides microceras (House dust mite).